Reading from the N-terminus, the 439-residue chain is Dihydroorotase (439 aa).

Residues His65 and His67 each coordinate Zn(2+). Substrate is bound by residues His67 to Arg69 and Asn99. Asp156, His183, His246, and Asp321 together coordinate Zn(2+). Asp321 is a catalytic residue. Substrate is bound by residues His325 and Phe339–Gly340.

This sequence belongs to the metallo-dependent hydrolases superfamily. DHOase family. Class I DHOase subfamily. The cofactor is Zn(2+).

The catalysed reaction is (S)-dihydroorotate + H2O = N-carbamoyl-L-aspartate + H(+). It functions in the pathway pyrimidine metabolism; UMP biosynthesis via de novo pathway; (S)-dihydroorotate from bicarbonate: step 3/3. Catalyzes the reversible cyclization of carbamoyl aspartate to dihydroorotate. This is Dihydroorotase from Chlorobaculum tepidum (strain ATCC 49652 / DSM 12025 / NBRC 103806 / TLS) (Chlorobium tepidum).